Consider the following 481-residue polypeptide: Cardiolipin synthase A (481 aa).

The next 2 helical transmembrane spans lie at 10-30 (FFGY…LHAL) and 40-60 (IAWA…YLIF). PLD phosphodiesterase domains lie at 220–247 (VNFR…GDEY) and 394–421 (QPGF…DNRS). Residues His225, Lys227, Asp232, His399, Lys401, and Asp406 contribute to the active site.

It belongs to the phospholipase D family. Cardiolipin synthase subfamily. ClsA sub-subfamily.

The protein localises to the cell inner membrane. It carries out the reaction 2 a 1,2-diacyl-sn-glycero-3-phospho-(1'-sn-glycerol) = a cardiolipin + glycerol. Catalyzes the reversible phosphatidyl group transfer from one phosphatidylglycerol molecule to another to form cardiolipin (CL) (diphosphatidylglycerol) and glycerol. The sequence is that of Cardiolipin synthase A from Pseudomonas putida (strain ATCC 47054 / DSM 6125 / CFBP 8728 / NCIMB 11950 / KT2440).